We begin with the raw amino-acid sequence, 111 residues long: MLSLLLLLLGLGSVFSAVISQKPSRDICQRGTSLTIQCQVDSQVTMMFWYRQQPGQSLTLIATANQGSEATYESGFVIDKFPISRPNLTFSTLTVSNMSPEDSSIYLCSVE.

An N-terminal signal peptide occupies residues 1 to 16 (MLSLLLLLLGLGSVFS). An Ig-like domain is found at 17-111 (AVISQKPSRD…DSSIYLCSVE (95 aa)). An intrachain disulfide couples C38 to C108. The N-linked (GlcNAc...) asparagine glycan is linked to N87.

As to quaternary structure, alpha-beta TR is a heterodimer composed of an alpha and beta chain; disulfide-linked. The alpha-beta TR is associated with the transmembrane signaling CD3 coreceptor proteins to form the TR-CD3 (TcR or TCR). The assembly of alpha-beta TR heterodimers with CD3 occurs in the endoplasmic reticulum where a single alpha-beta TR heterodimer associates with one CD3D-CD3E heterodimer, one CD3G-CD3E heterodimer and one CD247 homodimer forming a stable octameric structure. CD3D-CD3E and CD3G-CD3E heterodimers preferentially associate with TR alpha and TR beta chains, respectively. The association of the CD247 homodimer is the last step of TcR assembly in the endoplasmic reticulum and is required for transport to the cell surface.

It localises to the cell membrane. Its function is as follows. V region of the variable domain of T cell receptor (TR) beta chain that participates in the antigen recognition. Alpha-beta T cell receptors are antigen specific receptors which are essential to the immune response and are present on the cell surface of T lymphocytes. Recognize peptide-major histocompatibility (MH) (pMH) complexes that are displayed by antigen presenting cells (APC), a prerequisite for efficient T cell adaptive immunity against pathogens. Binding of alpha-beta TR to pMH complex initiates TR-CD3 clustering on the cell surface and intracellular activation of LCK that phosphorylates the ITAM motifs of CD3G, CD3D, CD3E and CD247 enabling the recruitment of ZAP70. In turn ZAP70 phosphorylates LAT, which recruits numerous signaling molecules to form the LAT signalosome. The LAT signalosome propagates signal branching to three major signaling pathways, the calcium, the mitogen-activated protein kinase (MAPK) kinase and the nuclear factor NF-kappa-B (NF-kB) pathways, leading to the mobilization of transcription factors that are critical for gene expression and essential for T cell growth and differentiation. The T cell repertoire is generated in the thymus, by V-(D)-J rearrangement. This repertoire is then shaped by intrathymic selection events to generate a peripheral T cell pool of self-MH restricted, non-autoaggressive T cells. Post-thymic interaction of alpha-beta TR with the pMH complexes shapes TR structural and functional avidity. The protein is T cell receptor beta variable 29-1 of Homo sapiens (Human).